We begin with the raw amino-acid sequence, 1733 residues long: ATP-binding cassette sub-family A member 17 (1733 aa).

7 helical membrane passes run 22–42 (TLIT…VLYL), 262–282 (FPLL…NSVL), 306–326 (AWFI…TVLF), 342–362 (TLIF…AFMM), 372–392 (GTVI…YITF), 403–423 (ILSC…ISLF), and 444–464 (FAQV…IAFL). Residues 519–752 (IEIQHLYKVF…YGAGYYMTII (234 aa)) enclose the ABC transporter 1 domain. 555–562 (GHNGAGKT) lines the ATP pocket. Asn609 is a glycosylation site (N-linked (GlcNAc...) asparagine). 7 consecutive transmembrane segments (helical) span residues 906 to 926 (LVLS…LTFF), 1082 to 1102 (LVVN…ILTV), 1128 to 1148 (LLWD…VFLW), 1160 to 1180 (IPAV…LVYT), 1192 to 1212 (CVKL…LVTV), 1230 to 1250 (IFLI…YYNF), and 1287 to 1307 (IGKY…MLFL). The 234-residue stretch at 1366–1599 (LVVKEVSKVY…FGISYSLQAK (234 aa)) folds into the ABC transporter 2 domain. 1401–1408 (GLNGAGKT) is a binding site for ATP. The segment covering 1681–1692 (ESSTKEQIQQEQ) has biased composition (polar residues). The disordered stretch occupies residues 1681–1733 (ESSTKEQIQQEQAVLASPSPPSNSRPISSPPSRLSSPTPKPLPSPPPSEPILL). Residues 1704–1717 (SRPISSPPSRLSSP) are compositionally biased toward low complexity. The segment covering 1718–1733 (TPKPLPSPPPSEPILL) has biased composition (pro residues).

Belongs to the ABC transporter superfamily. ABCA family. Post-translationally, N-glycosylated. In the testis, detected predominantly in elongated spermatids at the late stage of germ cell development and in sperm, with no expression detected in immature germ cells such as spermatogonia and spermatocytes or in somatic cells such as Sertoli cells (at protein level). Expressed in the head and tail midpiece of elongated spermatids and sperm (at protein level). Expressed exclusively in the testis.

It localises to the endoplasmic reticulum membrane. The protein localises to the cytoplasm. It carries out the reaction cholesterol(in) + ATP + H2O = cholesterol(out) + ADP + phosphate + H(+). Functionally, promotes cholesterol efflux from sperm which renders sperm capable of fertilization. Has also been shown to decrease levels of intracellular esterified neutral lipids including cholesteryl esters, fatty acid esters and triacylglycerols. The protein is ATP-binding cassette sub-family A member 17 of Mus musculus (Mouse).